The sequence spans 617 residues: UvrABC system protein C (617 aa).

The GIY-YIG domain maps to 22–100 (KLPGVYRFFD…IKALSPKYNI (79 aa)). Positions 209–244 (DELTRTLQHKMQTAAANLQFEEAARYRDQIQALGIM) constitute a UVR domain.

This sequence belongs to the UvrC family. As to quaternary structure, interacts with UvrB in an incision complex.

Its subcellular location is the cytoplasm. The UvrABC repair system catalyzes the recognition and processing of DNA lesions. UvrC both incises the 5' and 3' sides of the lesion. The N-terminal half is responsible for the 3' incision and the C-terminal half is responsible for the 5' incision. In Neisseria meningitidis serogroup A / serotype 4A (strain DSM 15465 / Z2491), this protein is UvrABC system protein C.